The chain runs to 345 residues: 4-hydroxy-2-oxovalerate aldolase 1 (345 aa).

Residues 9 to 261 form the Pyruvate carboxyltransferase domain; that stretch reads IRVTDTSLRD…RTGIDFFAIA (253 aa). 17–18 is a binding site for substrate; the sequence is RD. Residue Asp18 participates in Mn(2+) binding. His21 (proton acceptor) is an active-site residue. Substrate-binding residues include Ser171 and His200. Residues His200 and His202 each coordinate Mn(2+). Tyr291 contacts substrate.

The protein belongs to the 4-hydroxy-2-oxovalerate aldolase family.

The enzyme catalyses (S)-4-hydroxy-2-oxopentanoate = acetaldehyde + pyruvate. This is 4-hydroxy-2-oxovalerate aldolase 1 from Nocardia farcinica (strain IFM 10152).